The sequence spans 385 residues: Trans-enoyl reductase poxH (385 aa).

64–67 (QPYS) is an NADP(+) binding site. 156–163 (PDPAAPPI) lines the substrate pocket. Residues 199–202 (STSV), 223–226 (SGTD), Y241, and 289–290 (LG) each bind NADP(+). A substrate-binding site is contributed by 309–313 (HMAPL). 372–373 (KR) provides a ligand contact to NADP(+).

Belongs to the zinc-containing alcohol dehydrogenase family. Monomer.

Its pathway is secondary metabolite biosynthesis. Functionally, trans-enoyl reductase; part of the gene cluster that mediates the biosynthesis of oxaleimides, cytotoxic compounds containing an unusual disubstituted succinimide moiety. The first step of the pathway is provided by the HR-PKS poxF that serves in a new mode of collaborative biosynthesis with the PKS-NRPS poxE, by providing the olefin containing amino acid substrate via the synthesis of an ACP-bound dec-4-enoate. The cytochrome P450 monooxygenase poxM-catalyzed oxidation at the alpha-position creates the enzyme-bound 2-hydroxydec-4-enoyl-ACP thioester, which may be prone to spontaneous hydrolysis to yield 2-hydroxydec-4-enoic acid due to increased electrophilicity of the carbonyl. 2-hydroxydec-4-enoic acid can then be further oxidized by poxM to yield the alpha-ketoacid 2-oxodec-4-enoicacid, which is reductively aminated by the aminotransferase poxL to yield (S,E)-2-aminodec-4-enoic acid. The Hybrid PKS-NRPS synthetase poxE then performs condensation between the octaketide product of its PKS modules and the amino group of (S,E)-2-aminodec-4-enoic acid which is activated and incorporated by the adenylation domain. The resulting aminoacyl product can be cyclized by the Diels-Alderase PoxQ and reductively released by the reductive (R) domain of poxE to yield an aldehyde intermediate. The released aldehyde is then substrate for a Knoevenagel condensation by the hydrolyase poxO followed by an oxidation at the 5-position of the pyrrolidone ring. The presence of the olefin from the amino acid building block allows for migration of the substituted allyl group to occur. This allylic transposition reaction takes place in a conjugate addition, semipinacol-like fashion to yield a succinimide intermediate. Iterative two-electron oxidations of the C7 methyl of the succinimide intermediate to the carboxylic acid can be catalyzed by one of two remaining cytochrome P450 monooxygenasess poxC or poxD to yield oxaleimide A. Subsequent oxidation yields the maleimide scaffold oxaleimide I. Both oxaleimide A and oxaleimide I can undergo oxidative modifications in the decalin ring to yield the series of products oxaleimides B to H. This is Trans-enoyl reductase poxH from Penicillium oxalicum (strain 114-2 / CGMCC 5302) (Penicillium decumbens).